The primary structure comprises 501 residues: Ribose import ATP-binding protein RbsA (501 aa).

2 consecutive ABC transporter domains span residues 6–242 and 253–495; these read LQLS…VGRK and VHGQ…VGKK. 38-45 is an ATP binding site; it reads GENGAGKS.

The protein belongs to the ABC transporter superfamily. Ribose importer (TC 3.A.1.2.1) family. The complex is composed of an ATP-binding protein (RbsA), two transmembrane proteins (RbsC) and a solute-binding protein (RbsB).

It is found in the cell inner membrane. It carries out the reaction D-ribose(out) + ATP + H2O = D-ribose(in) + ADP + phosphate + H(+). Its function is as follows. Part of the ABC transporter complex RbsABC involved in ribose import. Responsible for energy coupling to the transport system. This Vibrio vulnificus (strain YJ016) protein is Ribose import ATP-binding protein RbsA.